The primary structure comprises 123 residues: Small ribosomal subunit protein uS13 (123 aa).

The disordered stretch occupies residues 97-123 (PVRGQRTRSNARTRKGPRPSRIKKKGK). Residues 101–123 (QRTRSNARTRKGPRPSRIKKKGK) show a composition bias toward basic residues.

Belongs to the universal ribosomal protein uS13 family. In terms of assembly, part of the 30S ribosomal subunit. Forms a loose heterodimer with protein S19. Forms two bridges to the 50S subunit in the 70S ribosome.

Functionally, located at the top of the head of the 30S subunit, it contacts several helices of the 16S rRNA. In the 70S ribosome it contacts the 23S rRNA (bridge B1a) and protein L5 of the 50S subunit (bridge B1b), connecting the 2 subunits; these bridges are implicated in subunit movement. Contacts the tRNAs in the A and P-sites. The sequence is that of Small ribosomal subunit protein uS13 from Fervidobacterium nodosum (strain ATCC 35602 / DSM 5306 / Rt17-B1).